Reading from the N-terminus, the 449-residue chain is Protein phosphatase fem-2 (449 aa).

The interval 28–34 (EEAFADE) is interaction with fem-1 and fem-3. The tract at residues 54-56 (IRF) is interaction with fem-3. The PPM-type phosphatase domain maps to 160 to 424 (GIHVSGDQLK…DNVSVVIGFL (265 aa)). D202, G203, D370, and D415 together coordinate Mg(2+).

This sequence belongs to the PP2C family. In terms of assembly, component of a complex containing fem-1, fem-2 and fem-3. Interacts (via N-terminus) with fem-1 and fem-3. Component of the CBC(fem-1) E3 ubiquitin-protein ligase complex, at least composed of cul-2, elc-1, tra-1, fem-1, fem-2 and fem-3; mediates the ubiquitination and subsequent proteasomal degradation of tra-1. Interacts with tra-1. Interacts with sel-10. It depends on Mg(2+) as a cofactor. Mn(2+) serves as cofactor.

It carries out the reaction O-phospho-L-seryl-[protein] + H2O = L-seryl-[protein] + phosphate. The catalysed reaction is O-phospho-L-threonyl-[protein] + H2O = L-threonyl-[protein] + phosphate. Its function is as follows. Dephosphorylates auto-phosphorylated Ca(2+)/calmodulin-dependent protein kinase unc-43/CAMKII in vitro. Involved in the regulation of sex determination. Together with fem-3, required for male sexual development by promoting the proteasomal-mediated degradation of tra-1, a transcription repressor of male-specific genes. Promotes apoptosis. The polypeptide is Protein phosphatase fem-2 (Caenorhabditis elegans).